We begin with the raw amino-acid sequence, 449 residues long: MFKTLTQNLTKIFDKLVNSGILTENQIDTAMRDVRVALLESDVALPVIKGFIEEVKQKALGQEVIKSVSPGQMIIKIIHEEMINLLASTESTTKLNLNAKPPVNLLIVGLQGGGKTTASGKLALRLKNQNKKVLLVSLDTYRPAAQEQLAIIANSVNIDSLPIVKGEKPLDIVKRAIGEAQISAYDVVIYDTAGRIQIDNVMMEEALAIKKILNPTETLLVIDSMTGQDAVITAKTFSEKLEISGLILSRIDGDTKGGAALSVKYFTQKPIKFLSSGEKLTDLEEFNAERLASRILDMGDIISFVKKAASIVDREEAEKTAIKLKSGKFDLNDYLQQMRSIKKMGGFGSILSMLPGSGKIFDQIDQSKLNSKIIEHQEAIILSMTLKERKNPDIINASRRKRIAAGAGMTVQKVNILLKQYKQISAVMKKTSKMNPKNLLRSGIGKLFS.

Residues 109–116 (GLQGGGKT), 191–195 (DTAGR), and 249–252 (SRID) contribute to the GTP site.

This sequence belongs to the GTP-binding SRP family. SRP54 subfamily. Part of the signal recognition particle protein translocation system, which is composed of SRP and FtsY. SRP is a ribonucleoprotein composed of Ffh and a 4.5S RNA molecule.

The protein localises to the cytoplasm. It carries out the reaction GTP + H2O = GDP + phosphate + H(+). Functionally, involved in targeting and insertion of nascent membrane proteins into the cytoplasmic membrane. Binds to the hydrophobic signal sequence of the ribosome-nascent chain (RNC) as it emerges from the ribosomes. The SRP-RNC complex is then targeted to the cytoplasmic membrane where it interacts with the SRP receptor FtsY. Interaction with FtsY leads to the transfer of the RNC complex to the Sec translocase for insertion into the membrane, the hydrolysis of GTP by both Ffh and FtsY, and the dissociation of the SRP-FtsY complex into the individual components. The polypeptide is Signal recognition particle protein (Rickettsia prowazekii (strain Madrid E)).